The sequence spans 407 residues: Polygalacturonase (407 aa).

The first 26 residues, 1-26 (MAPHLNIVPSMFVLLLLFISASKVQP), serve as a signal peptide directing secretion. PbH1 repeat units follow at residues 180–206 (CKNITLERLKIEAPDESPNTDGIHMGK) and 207–228 (SEGVNIIASDIKTGDDCISIGD). An N-linked (GlcNAc...) asparagine glycan is attached at N182. D221 functions as the Proton donor in the catalytic mechanism. Cysteines 223 and 240 form a disulfide. H244 is an active-site residue. PbH1 repeat units follow at residues 260 to 281 (VEGIKISNCTITNTSNGARIKT) and 290 to 311 (VSEIHFEDITMNNVSSPILIDQ). N267, N272, N302, and N331 each carry an N-linked (GlcNAc...) asparagine glycan. 2 cysteine pairs are disulfide-bonded: C351–C357 and C379–C395. Residues 357–384 (CQNVELADIDIQHNGAEPATSQCLNVKP) form a PbH1 5 repeat.

This sequence belongs to the glycosyl hydrolase 28 family. Pollen.

The protein resides in the secreted. It is found in the cell wall. It catalyses the reaction (1,4-alpha-D-galacturonosyl)n+m + H2O = (1,4-alpha-D-galacturonosyl)n + (1,4-alpha-D-galacturonosyl)m.. Its function is as follows. May function in the depolymerization of the pectin in its walls during pollen tube elongation, or in that of the pistil during pollination. In Gossypium barbadense (Sea Island cotton), this protein is Polygalacturonase (G9).